A 397-amino-acid chain; its full sequence is Small ribosomal subunit protein mS29 (397 aa).

The transit peptide at 1–17 directs the protein to the mitochondrion; the sequence is MLKGMTRLVSRVHKLDP. N6-acetyllysine is present on residues K174 and K206.

Belongs to the mitochondrion-specific ribosomal protein mS29 family. In terms of assembly, component of the mitochondrial ribosome small subunit (28S) which comprises a 12S rRNA and about 30 distinct proteins. Interacts with DELE1. Interacts with NOA1.

It localises to the mitochondrion. The enzyme catalyses GTP + H2O = GDP + phosphate + H(+). In terms of biological role, as a component of the mitochondrial small ribosomal subunit, it plays a role in the translation of mitochondrial mRNAs. Involved in mediating interferon-gamma-induced cell death. Displays GTPase activity in vitro. This is Small ribosomal subunit protein mS29 from Bos taurus (Bovine).